Consider the following 109-residue polypeptide: Protein FAM32A-like (109 aa).

A disordered region spans residues 1-48 (MSEYKSVQKGSLKLKGVSLPSKKKKKKNKEMKRLEEQVLTSENEEGTK). Low complexity predominate over residues 9–20 (KGSLKLKGVSLP). The span at 21-30 (SKKKKKKNKE) shows a compositional bias: basic residues.

This sequence belongs to the FAM32 family.

It localises to the nucleus. Functionally, may induce G2 arrest and apoptosis. May also increase cell sensitivity to apoptotic stimuli. The protein is Protein FAM32A-like (fam32al) of Danio rerio (Zebrafish).